The primary structure comprises 199 residues: Protein-methionine-sulfoxide reductase heme-binding subunit MsrQ (199 aa).

A run of 4 helical transmembrane segments spans residues Trp10–Ile30, Leu82–Ile102, Pro116–Thr136, and Val153–Ser173.

This sequence belongs to the MsrQ family. Heterodimer of a catalytic subunit (MsrP) and a heme-binding subunit (MsrQ). It depends on FMN as a cofactor. Requires heme b as cofactor.

It is found in the cell inner membrane. Part of the MsrPQ system that repairs oxidized periplasmic proteins containing methionine sulfoxide residues (Met-O), using respiratory chain electrons. Thus protects these proteins from oxidative-stress damage caused by reactive species of oxygen and chlorine generated by the host defense mechanisms. MsrPQ is essential for the maintenance of envelope integrity under bleach stress, rescuing a wide series of structurally unrelated periplasmic proteins from methionine oxidation, including the primary periplasmic chaperone SurA and the lipoprotein Pal. MsrQ provides electrons for reduction to the reductase catalytic subunit MsrP, using the quinone pool of the respiratory chain. The protein is Protein-methionine-sulfoxide reductase heme-binding subunit MsrQ of Salmonella newport (strain SL254).